The sequence spans 1059 residues: Carbamoyl phosphate synthase large chain (1059 aa).

A carboxyphosphate synthetic domain region spans residues 1–401 (MPKRTDIHKI…ALLKAVASLE (401 aa)). 12 residues coordinate ATP: Arg129, Arg169, Gly175, Gly176, Lys208, Ile210, Glu215, Gly241, Ile242, His243, Gln284, and Glu298. One can recognise an ATP-grasp 1 domain in the interval 133–327 (KELMQELGEP…IAKLAAKIAV (195 aa)). Mg(2+) contacts are provided by Gln284, Glu298, and Asn300. Mn(2+) is bound by residues Gln284, Glu298, and Asn300. An oligomerization domain region spans residues 402–546 (IDQKDLLSKE…YSTYETENES (145 aa)). The tract at residues 547 to 929 (RRSAKPSVLV…ALYKAFAGAG (383 aa)) is carbamoyl phosphate synthetic domain. In terms of domain architecture, ATP-grasp 2 spans 671-861 (DQVIKDLNLR…MAQLATKVIL (191 aa)). ATP contacts are provided by Arg707, Ala746, Leu748, Glu752, Gly777, Val778, His779, Ser780, Gln820, and Glu832. Gln820, Glu832, and Asn834 together coordinate Mg(2+). Mn(2+) is bound by residues Gln820, Glu832, and Asn834. The MGS-like domain maps to 930 to 1059 (MEVPDNGAVL…EMTSFKTTEL (130 aa)). The segment at 930–1059 (MEVPDNGAVL…EMTSFKTTEL (130 aa)) is allosteric domain.

This sequence belongs to the CarB family. Composed of two chains; the small (or glutamine) chain promotes the hydrolysis of glutamine to ammonia, which is used by the large (or ammonia) chain to synthesize carbamoyl phosphate. Tetramer of heterodimers (alpha,beta)4. It depends on Mg(2+) as a cofactor. The cofactor is Mn(2+).

The catalysed reaction is hydrogencarbonate + L-glutamine + 2 ATP + H2O = carbamoyl phosphate + L-glutamate + 2 ADP + phosphate + 2 H(+). The enzyme catalyses hydrogencarbonate + NH4(+) + 2 ATP = carbamoyl phosphate + 2 ADP + phosphate + 2 H(+). Its pathway is amino-acid biosynthesis; L-arginine biosynthesis; carbamoyl phosphate from bicarbonate: step 1/1. The protein operates within pyrimidine metabolism; UMP biosynthesis via de novo pathway; (S)-dihydroorotate from bicarbonate: step 1/3. Its function is as follows. Large subunit of the glutamine-dependent carbamoyl phosphate synthetase (CPSase). CPSase catalyzes the formation of carbamoyl phosphate from the ammonia moiety of glutamine, carbonate, and phosphate donated by ATP, constituting the first step of 2 biosynthetic pathways, one leading to arginine and/or urea and the other to pyrimidine nucleotides. The large subunit (synthetase) binds the substrates ammonia (free or transferred from glutamine from the small subunit), hydrogencarbonate and ATP and carries out an ATP-coupled ligase reaction, activating hydrogencarbonate by forming carboxy phosphate which reacts with ammonia to form carbamoyl phosphate. The chain is Carbamoyl phosphate synthase large chain from Limosilactobacillus fermentum (strain NBRC 3956 / LMG 18251) (Lactobacillus fermentum).